The primary structure comprises 396 residues: Succinyl-CoA:mesaconate CoA-transferase (396 aa).

The active-site Nucleophile is Asp-175.

It belongs to the CoA-transferase III family.

The catalysed reaction is mesaconate + succinyl-CoA = 2-methylfumaryl-CoA + succinate. Functionally, involved in the methylaspartate cycle. Catalyzes the transfer of the CoA moiety from succinyl-CoA to mesaconate to generate mesaconyl-CoA (2-methylfumaryl-CoA) and succinate. This is Succinyl-CoA:mesaconate CoA-transferase from Haloarcula marismortui (strain ATCC 43049 / DSM 3752 / JCM 8966 / VKM B-1809) (Halobacterium marismortui).